The primary structure comprises 309 residues: Fructosamine-3-kinase (309 aa).

Methionine 1 bears the N-acetylmethionine mark. 89-91 (EHL) serves as a coordination point for ATP. Aspartate 217 serves as the catalytic Proton acceptor.

It belongs to the fructosamine kinase family. Monomer. In terms of tissue distribution, widely expressed. Expressed in erythrocytes.

It carries out the reaction N(6)-(D-fructosyl)-L-lysyl-[protein] + ATP = N(6)-(3-O-phospho-D-fructosyl)-L-lysyl-[protein] + ADP + H(+). The catalysed reaction is N(6)-D-ribulosyl-L-lysyl-[protein] + ATP = N(6)-(3-O-phospho-D-ribulosyl)-L-lysyl-[protein] + ADP + H(+). It catalyses the reaction N(6)-(D-psicosyl)-L-lysyl-[protein] + ATP = N(6)-(3-O-phospho-D-psicosyl)-L-lysyl-[protein] + ADP + H(+). In terms of biological role, fructosamine-3-kinase involved in protein deglycation by mediating phosphorylation of fructoselysine residues on glycated proteins, to generate fructoselysine-3 phosphate. Fructoselysine-3 phosphate adducts are unstable and decompose under physiological conditions. Involved in intracellular deglycation in erythrocytes. Involved in the response to oxidative stress by mediating deglycation of NFE2L2/NRF2, glycation impairing NFE2L2/NRF2 function. Also able to phosphorylate psicosamines and ribulosamines. This Homo sapiens (Human) protein is Fructosamine-3-kinase.